The primary structure comprises 373 residues: Flagellar P-ring protein 1 (373 aa).

Residues 1–24 form the signal peptide; that stretch reads MRGISRLYWSLVLICFAFAPIVEA.

This sequence belongs to the FlgI family. As to quaternary structure, the basal body constitutes a major portion of the flagellar organelle and consists of four rings (L,P,S, and M) mounted on a central rod.

The protein localises to the periplasm. It localises to the bacterial flagellum basal body. Functionally, assembles around the rod to form the L-ring and probably protects the motor/basal body from shearing forces during rotation. This is Flagellar P-ring protein 1 from Hahella chejuensis (strain KCTC 2396).